A 579-amino-acid chain; its full sequence is Vitamin B6 transporter TPN1 (579 aa).

Residues 1–98 are Cytoplasmic-facing; it reads MNRDNMDTTK…LHVAGLWLSA (98 aa). The chain crosses the membrane as a helical span at residues 99–119; it reads TGGLSSMSSFLLGPLLFGLSF. The Extracellular segment spans residues 120-122; that stretch reads RES. The helical transmembrane segment at 123–143 threads the bilayer; the sequence is VASSLISVTIGCLIAAYCSIM. Over 144-157 the chain is Cytoplasmic; sequence GPQSGCRQMVTARY. Residues 158–178 traverse the membrane as a helical segment; it reads LFGWWFVKLVALASIIGVMGW. The Extracellular segment spans residues 179–198; the sequence is SVVNSVVGGEMLAAISNDKV. A helical membrane pass occupies residues 199-219; it reads PLWVGIVIVTVCSFLVAIFGI. Residues 220–221 are Cytoplasmic-facing; sequence KQ. Residues 222–242 form a helical membrane-spanning segment; sequence VIKVETYLSVPVLTAFLLLYI. Residues 243-274 are Extracellular-facing; that stretch reads SSSDKYSFVNAYVSKGNLDSSTRKGNWMSFFS. Residues 275-295 traverse the membrane as a helical segment; that stretch reads LCYSITATWGSITADYYILFP. At 296–302 the chain is on the cytoplasmic side; the sequence is EDTPYIQ. A helical membrane pass occupies residues 303 to 323; the sequence is IFCLTFFGTFLPTCFVGILGL. The Extracellular portion of the chain corresponds to 324-362; it reads LLASVAMSYKPWSVEYDSHGMGGLLWAGFQRWNGFGKFC. The helical transmembrane segment at 363–383 threads the bilayer; it reads VVVLVFSLVSNNIINTYSAAF. At 384–394 the chain is on the cytoplasmic side; the sequence is SIQLSSVFCAK. The helical transmembrane segment at 395 to 415 threads the bilayer; sequence IPRWFWSIVCTIICLVCALIG. Residues 416–421 lie on the Extracellular side of the membrane; sequence RNHFST. Residues 422–442 traverse the membrane as a helical segment; the sequence is ILGNFLPMIGYWISMYFILLF. Residues 443–519 are Cytoplasmic-facing; it reads EENLVFRRFF…EVLTHGYAAT (77 aa). Residues 520–540 form a helical membrane-spanning segment; that stretch reads FAFIVGVAGVVVGMAQAYWIG. At 541–545 the chain is on the extracellular side; it reads PIAAK. A helical transmembrane segment spans residues 546–566; it reads FGEYGGDVAMWLSMAFSGVVY. Topologically, residues 567 to 579 are cytoplasmic; the sequence is PPCRYLELRKFGR.

The protein belongs to the purine-cytosine permease (2.A.39) family.

The protein resides in the membrane. In terms of biological role, thiamine-regulated, high affinity import carrier of pyridoxine, pyridoxal and pyridoxamine. The chain is Vitamin B6 transporter TPN1 (TPN1) from Saccharomyces cerevisiae (strain ATCC 204508 / S288c) (Baker's yeast).